We begin with the raw amino-acid sequence, 105 residues long: Nucleoid-associated protein cu1912 (105 aa).

Belongs to the YbaB/EbfC family. In terms of assembly, homodimer.

It localises to the cytoplasm. Its subcellular location is the nucleoid. Binds to DNA and alters its conformation. May be involved in regulation of gene expression, nucleoid organization and DNA protection. This chain is Nucleoid-associated protein cu1912, found in Corynebacterium urealyticum (strain ATCC 43042 / DSM 7109).